A 121-amino-acid polypeptide reads, in one-letter code: Large ribosomal subunit protein bL12 (121 aa).

The protein belongs to the bacterial ribosomal protein bL12 family. Homodimer. Part of the ribosomal stalk of the 50S ribosomal subunit. Forms a multimeric L10(L12)X complex, where L10 forms an elongated spine to which 2 to 4 L12 dimers bind in a sequential fashion. Binds GTP-bound translation factors.

Its function is as follows. Forms part of the ribosomal stalk which helps the ribosome interact with GTP-bound translation factors. Is thus essential for accurate translation. The sequence is that of Large ribosomal subunit protein bL12 from Streptococcus suis (strain 98HAH33).